Here is a 504-residue protein sequence, read N- to C-terminus: ATP synthase subunit alpha (504 aa).

Residue 169-176 (GDRQTGKT) coordinates ATP.

The protein belongs to the ATPase alpha/beta chains family. In terms of assembly, F-type ATPases have 2 components, CF(1) - the catalytic core - and CF(0) - the membrane proton channel. CF(1) has five subunits: alpha(3), beta(3), gamma(1), delta(1), epsilon(1). CF(0) has three main subunits: a(1), b(2) and c(9-12). The alpha and beta chains form an alternating ring which encloses part of the gamma chain. CF(1) is attached to CF(0) by a central stalk formed by the gamma and epsilon chains, while a peripheral stalk is formed by the delta and b chains.

The protein localises to the cell membrane. The catalysed reaction is ATP + H2O + 4 H(+)(in) = ADP + phosphate + 5 H(+)(out). Its function is as follows. Produces ATP from ADP in the presence of a proton gradient across the membrane. The alpha chain is a regulatory subunit. This Clostridium botulinum (strain Loch Maree / Type A3) protein is ATP synthase subunit alpha.